Here is a 331-residue protein sequence, read N- to C-terminus: Barley B recombinant-like protein D (331 aa).

Residues 43–101 (ALMNDRDNAIRERDHALAEKKAAIAERDMAFTQRDAAMAERNAAVVERDNALAALELAR) are a coiled coil. Residues 51 to 86 (AIRERDHALAEKKAAIAERDMAFTQRDAAMAERNAA) are alanine-zipper. Positions 104–122 (GLNMNNGNGFPQGSLSGSK) are enriched in polar residues. Disordered stretches follow at residues 104–140 (GLNMNNGNGFPQGSLSGSKNIHHHDQLSHAQSSPLQL) and 156–205 (AYPI…VGMS).

The protein belongs to the BBR/BPC family. As to quaternary structure, homodimer. Heterodimer.

The protein resides in the nucleus. Transcriptional regulator that specifically binds to GA-rich elements (GAGA-repeats) present in regulatory sequences of genes involved in developmental processes. In Oryza sativa subsp. japonica (Rice), this protein is Barley B recombinant-like protein D.